Consider the following 276-residue polypeptide: NADPH-dependent 7-cyano-7-deazaguanine reductase (276 aa).

83–85 (IES) contacts substrate. Residue 85 to 86 (SK) coordinates NADPH. Cys184 serves as the catalytic Thioimide intermediate. The active-site Proton donor is Asp191. 223 to 224 (HE) lines the substrate pocket. 252 to 253 (RG) lines the NADPH pocket.

The protein belongs to the GTP cyclohydrolase I family. QueF type 2 subfamily. In terms of assembly, homodimer.

Its subcellular location is the cytoplasm. The enzyme catalyses 7-aminomethyl-7-carbaguanine + 2 NADP(+) = 7-cyano-7-deazaguanine + 2 NADPH + 3 H(+). It functions in the pathway tRNA modification; tRNA-queuosine biosynthesis. Functionally, catalyzes the NADPH-dependent reduction of 7-cyano-7-deazaguanine (preQ0) to 7-aminomethyl-7-deazaguanine (preQ1). This chain is NADPH-dependent 7-cyano-7-deazaguanine reductase, found in Pseudomonas syringae pv. syringae (strain B728a).